Consider the following 410-residue polypeptide: MKLSKLLQLAVFSSLVTSKNIFDLESLKQGLQDEETVNNDKREPVNLLYLDRFKMGVSDEAKGNAKFKRDPKNVIDPASLKEGSAEEEQKDKREPKNLFNLQALHEGLKDEETKSKREAKNLPNLEALEEALKGGSLPKKDAKNLIDLVALKQSLEKEAAKRDAKNIPDLEALKTGIEEEEGQVAKRDAKNVINLSNFIETPSKREGKNLFDLTKFQQSGQPIKKRDQKILKQEKSLFVLNSVDCFNNLLQSILPQLSSISIFSSYIRQFASIDARTANPQKVMLIVAPDNDSLETKLSDLKPWEFPEQITPEQSEQEQDKTLKNNLLHFLNGHLINNFEENLVIDKSSTDAVTIISKLNNGKFLKIKQDQLSQKFSIRLLDSENWIDVETIKQVENGFVLIINDSLVKP.

The first 18 residues, 1 to 18 (MKLSKLLQLAVFSSLVTS), serve as a signal peptide directing secretion. Basic and acidic residues-rich tracts occupy residues 64 to 73 (NAKFKRDPKN) and 83 to 96 (GSAE…REPK). The tract at residues 64–98 (NAKFKRDPKNVIDPASLKEGSAEEEQKDKREPKNL) is disordered. The region spanning 247–407 (NNLLQSILPQ…GFVLIINDSL (161 aa)) is the FAS1 domain.

The protein resides in the vacuole. This is FAS1 domain-containing protein CaO19.3004 from Candida albicans (strain SC5314 / ATCC MYA-2876) (Yeast).